We begin with the raw amino-acid sequence, 429 residues long: MKKFDKSIAAFEEAQDLMPGGVNSPVRAFKSVGMNPLFMERGKGSKVYDIDGNEYIDYVLSWGPLIHGHANDRVVEALKAVAERGTSFGAPTEIENKLAKLVIERVPSIEIVRMVNSGTEATMSALRLARGYTGRNKILKFIGCYHGHGDSLLIKAGSGVATLGLPDSPGVPEGVAKNTITVAYNDLESVKYAFEQFGDDIACVIVEPVAGNMGVVPPQPGFLEGLREVTEQNGALLIFDEVMTGFRVAYNCGQGYYGVTPDLTCLGKVIGGGLPVGAYGGKAEIMRQVAPSGPIYQAGTLSGNPLAMAAGYETLVQLTPESYVEFERKAEMLEAGLRKAAEKHGIPHHINRAGSMIGIFFTDEPVINYDAAKSSNLEFFAAYYREMVEQGVFLPPSQFEGLFLSTAHSDADIEATIAAAEIAMSKLKA.

The residue at position 268 (lysine 268) is an N6-(pyridoxal phosphate)lysine.

Belongs to the class-III pyridoxal-phosphate-dependent aminotransferase family. HemL subfamily. Homodimer. The cofactor is pyridoxal 5'-phosphate.

The protein resides in the cytoplasm. The enzyme catalyses (S)-4-amino-5-oxopentanoate = 5-aminolevulinate. It functions in the pathway porphyrin-containing compound metabolism; protoporphyrin-IX biosynthesis; 5-aminolevulinate from L-glutamyl-tRNA(Glu): step 2/2. The polypeptide is Glutamate-1-semialdehyde 2,1-aminomutase 2 (Bacillus cereus (strain AH187)).